Here is a 434-residue protein sequence, read N- to C-terminus: Methylenetetrahydrofolate--tRNA-(uracil-5-)-methyltransferase TrmFO (434 aa).

8–13 (GAGLAG) is an FAD binding site.

It belongs to the MnmG family. TrmFO subfamily. FAD is required as a cofactor.

It localises to the cytoplasm. The catalysed reaction is uridine(54) in tRNA + (6R)-5,10-methylene-5,6,7,8-tetrahydrofolate + NADH + H(+) = 5-methyluridine(54) in tRNA + (6S)-5,6,7,8-tetrahydrofolate + NAD(+). It catalyses the reaction uridine(54) in tRNA + (6R)-5,10-methylene-5,6,7,8-tetrahydrofolate + NADPH + H(+) = 5-methyluridine(54) in tRNA + (6S)-5,6,7,8-tetrahydrofolate + NADP(+). In terms of biological role, catalyzes the folate-dependent formation of 5-methyl-uridine at position 54 (M-5-U54) in all tRNAs. The protein is Methylenetetrahydrofolate--tRNA-(uracil-5-)-methyltransferase TrmFO of Exiguobacterium sibiricum (strain DSM 17290 / CCUG 55495 / CIP 109462 / JCM 13490 / 255-15).